A 697-amino-acid chain; its full sequence is uncharacterized protein (697 aa).

Residues 516–545 (ADQSQNDVVALSSRIDRLTQEVVALQNSEK) adopt a coiled-coil conformation.

This is an uncharacterized protein from Callospermophilus lateralis (Golden-mantled ground squirrel).